The following is a 378-amino-acid chain: UPF0754 membrane protein BCG9842_B4423 (378 aa).

A helical membrane pass occupies residues 357-377 (YLGALLGGIIGLVQGLLLLFL).

Belongs to the UPF0754 family.

The protein localises to the cell membrane. The chain is UPF0754 membrane protein BCG9842_B4423 from Bacillus cereus (strain G9842).